The sequence spans 69 residues: Light-harvesting protein B-1015 alpha chain (69 aa).

The Cytoplasmic portion of the chain corresponds to 2–20 (ATEYRTASWKLWLILDPRR). The helical transmembrane segment at 21-41 (VLTALFVYLTVIALLIHFGLL) threads the bilayer. His37 contacts a bacteriochlorophyll. Over 42-59 (STDRLNWWEFQRGLPKAA) the chain is Periplasmic. Residues 60–69 (SLVVVPPAVG) constitute a propeptide that is removed on maturation.

This sequence belongs to the antenna complex alpha subunit family. As to quaternary structure, the core complex is formed by different alpha and beta chains, binding bacteriochlorophyll molecules, and arranged most probably in tetrameric structures disposed around the reaction center. The non-pigmented gamma chains may constitute additional components.

It is found in the cell inner membrane. Functionally, antenna complexes are light-harvesting systems, which transfer the excitation energy to the reaction centers. This is Light-harvesting protein B-1015 alpha chain (pufA) from Blastochloris viridis (Rhodopseudomonas viridis).